We begin with the raw amino-acid sequence, 417 residues long: Exodeoxyribonuclease 7 large subunit (417 aa).

This sequence belongs to the XseA family. As to quaternary structure, heterooligomer composed of large and small subunits.

It is found in the cytoplasm. The enzyme catalyses Exonucleolytic cleavage in either 5'- to 3'- or 3'- to 5'-direction to yield nucleoside 5'-phosphates.. In terms of biological role, bidirectionally degrades single-stranded DNA into large acid-insoluble oligonucleotides, which are then degraded further into small acid-soluble oligonucleotides. This Helicobacter hepaticus (strain ATCC 51449 / 3B1) protein is Exodeoxyribonuclease 7 large subunit.